The primary structure comprises 460 residues: Phosphoglucomutase (460 aa).

The Phosphoserine intermediate role is filled by serine 103. Serine 103 is a Mg(2+) binding site. Substrate contacts are provided by residues 103–104 (SH) and lysine 113. 3 residues coordinate Mg(2+): aspartate 239, aspartate 241, and aspartate 243. Residues 243–244 (DR), threonine 303, and 322–324 (EMS) contribute to the substrate site.

The protein belongs to the phosphohexose mutase family. It depends on Mg(2+) as a cofactor.

It localises to the cytoplasm. It catalyses the reaction alpha-D-glucose 1-phosphate = alpha-D-glucose 6-phosphate. Its function is as follows. This enzyme participates in both the breakdown and synthesis of glucose. The protein is Phosphoglucomutase (pgm) of Neisseria meningitidis serogroup B (strain ATCC BAA-335 / MC58).